The sequence spans 436 residues: 3-ketoacyl-CoA thiolase (436 aa).

Cysteine 99 (acyl-thioester intermediate) is an active-site residue. Residues histidine 392 and cysteine 422 each act as proton acceptor in the active site.

Belongs to the thiolase-like superfamily. Thiolase family. In terms of assembly, heterotetramer of two alpha chains (FadJ) and two beta chains (FadI).

Its subcellular location is the cytoplasm. The catalysed reaction is an acyl-CoA + acetyl-CoA = a 3-oxoacyl-CoA + CoA. The protein operates within lipid metabolism; fatty acid beta-oxidation. Its function is as follows. Catalyzes the final step of fatty acid oxidation in which acetyl-CoA is released and the CoA ester of a fatty acid two carbons shorter is formed. This is 3-ketoacyl-CoA thiolase from Shewanella sediminis (strain HAW-EB3).